Here is a 146-residue protein sequence, read N- to C-terminus: Flagellar assembly factor FliW (146 aa).

It belongs to the FliW family. In terms of assembly, interacts with translational regulator CsrA and flagellin(s).

It localises to the cytoplasm. Acts as an anti-CsrA protein, binds CsrA and prevents it from repressing translation of its target genes, one of which is flagellin. Binds to flagellin and participates in the assembly of the flagellum. The chain is Flagellar assembly factor FliW from Azoarcus sp. (strain BH72).